A 244-amino-acid chain; its full sequence is Na(+)-translocating NADH-quinone reductase subunit E (244 aa).

Transmembrane regions (helical) follow at residues 11–31, 47–67, 90–110, 123–143, 153–173, and 189–209; these read LLGIFLQATFIQNILLSTFLG, GLGMSVALVLTITGSINWLIH, FLELITFIVVIAAFTQILELL, GIFLPLIAVNCAILGGVLFGI, VVFSLGSGCGWWLAIVLFATI, and MGISFITTGLIAMAFMGLTGI.

The protein belongs to the NqrDE/RnfAE family. In terms of assembly, composed of six subunits; NqrA, NqrB, NqrC, NqrD, NqrE and NqrF.

It localises to the cell inner membrane. The catalysed reaction is a ubiquinone + n Na(+)(in) + NADH + H(+) = a ubiquinol + n Na(+)(out) + NAD(+). Functionally, NQR complex catalyzes the reduction of ubiquinone-1 to ubiquinol by two successive reactions, coupled with the transport of Na(+) ions from the cytoplasm to the periplasm. NqrA to NqrE are probably involved in the second step, the conversion of ubisemiquinone to ubiquinol. The chain is Na(+)-translocating NADH-quinone reductase subunit E from Chlamydia muridarum (strain MoPn / Nigg).